The following is a 489-amino-acid chain: MQGRSLPFRVATLVTGLLECLGFAGVLFGWTSLVFVFKKQHYFEELCELDAGSLGNATGLDECRARDERFSLIFTLASFTINFMTFPTGYIFDRFKTTVARLIAIFLYTSATLTIAFTSADSAVLLFLAMPMLAVGGILFLITNLQIGNLFGKHRSTIITMYNGAFDSSSAVFLIIKLLYEQGVTIKASFLFISVCSAWHVGRTLLLMPRGHIPYPLPANYHYGLCSRDSPPEEDKKEAESEKLELQSKEFLSPKKETPGQQQAPGSFWSHTFSPRFAWHVVWLSVIQLWHYLFIGTLNSLLNNLASRDSAIVSTYTNAFAVTQFFGVLCAPWNGLLMDRLKHKYQEEAKRTGAVAKAAALRSVVPSLTLTSLLSLGFAVCASIPVLPLQYATFILQVVSRSFLYGCNAAFLTLAFPSEHFGKLFGLVMALSAVVSLLQFPLFTLIKGPLQNDPLYVNLMLVLLTLLTFIHPFLVNRECQRKESPREVA.

A helical transmembrane segment spans residues 17–37; the sequence is LLECLGFAGVLFGWTSLVFVF. Asn56 is a glycosylation site (N-linked (GlcNAc...) asparagine). The next 4 membrane-spanning stretches (helical) occupy residues 72-92, 102-122, 123-143, and 158-180; these read LIFT…GYIF, LIAI…SADS, AVLL…FLIT, and IITM…KLLY. At Ser253 the chain carries Phosphoserine. At Thr258 the chain carries Phosphothreonine. 6 helical membrane passes run 277-297, 318-338, 358-380, 402-422, 426-446, and 455-475; these read FAWH…FIGT, NAFA…GLLM, AAAL…GFAV, SFLY…EHFG, GLVM…FTLI, and LYVN…PFLV.

It belongs to the SLC43A transporter (TC 2.A.1.44) family.

It is found in the basolateral cell membrane. It catalyses the reaction adenine(out) = adenine(in). The catalysed reaction is guanine(out) = guanine(in). The enzyme catalyses hypoxanthine(out) = hypoxanthine(in). Functionally, sodium-independent purine-selective nucleobase transporter which mediates the equilibrative transport of extracellular purine nucleobases such as adenine, guanine and hypoxanthine. May regulate fatty acid (FA) transport in adipocytes, acting as a positive regulator of FA efflux and as a negative regulator of FA uptake. In Bos taurus (Bovine), this protein is Equilibrative nucleobase transporter 1 (SLC43A3).